Consider the following 459-residue polypeptide: GTPase Der (459 aa).

EngA-type G domains are found at residues 3-169 and 183-358; these read PLVA…PPKE and IRLA…DQFR. GTP contacts are provided by residues 9–16, 56–60, 119–122, 189–196, 236–240, and 301–304; these read GRPNVGKS, DTGGF, NKLD, DTAGI, and NKWD. Positions 359–442 constitute a KH-like domain; the sequence is FRAPTPQLNR…PIRLIFKGRP (84 aa).

Belongs to the TRAFAC class TrmE-Era-EngA-EngB-Septin-like GTPase superfamily. EngA (Der) GTPase family. Associates with the 50S ribosomal subunit.

In terms of biological role, GTPase that plays an essential role in the late steps of ribosome biogenesis. In Myxococcus xanthus (strain DK1622), this protein is GTPase Der.